A 199-amino-acid polypeptide reads, in one-letter code: Nucleoside triphosphate pyrophosphatase (199 aa).

The Proton acceptor role is filled by D76.

The protein belongs to the Maf family. Requires a divalent metal cation as cofactor.

The protein localises to the cytoplasm. The catalysed reaction is a ribonucleoside 5'-triphosphate + H2O = a ribonucleoside 5'-phosphate + diphosphate + H(+). It catalyses the reaction a 2'-deoxyribonucleoside 5'-triphosphate + H2O = a 2'-deoxyribonucleoside 5'-phosphate + diphosphate + H(+). Nucleoside triphosphate pyrophosphatase. May have a dual role in cell division arrest and in preventing the incorporation of modified nucleotides into cellular nucleic acids. This is Nucleoside triphosphate pyrophosphatase from Ruegeria sp. (strain TM1040) (Silicibacter sp.).